The primary structure comprises 833 residues: Leucine--tRNA ligase (833 aa).

The 'HIGH' region motif lies at 41–52 (PYPSGAGLHVGH). The short motif at 610–614 (KMSKS) is the 'KMSKS' region element. Lys613 serves as a coordination point for ATP.

It belongs to the class-I aminoacyl-tRNA synthetase family.

Its subcellular location is the cytoplasm. The catalysed reaction is tRNA(Leu) + L-leucine + ATP = L-leucyl-tRNA(Leu) + AMP + diphosphate. This Streptococcus agalactiae serotype III (strain NEM316) protein is Leucine--tRNA ligase.